The primary structure comprises 1429 residues: Protein lin-12 (1429 aa).

A signal peptide spans methionine 1–leucine 15. Topologically, residues serine 16–asparagine 908 are extracellular. 2 EGF-like domains span residues histidine 20–glutamate 61 and threonine 114–glutamate 150. Intrachain disulfides connect cysteine 24–cysteine 35, cysteine 29–cysteine 49, cysteine 51–cysteine 60, cysteine 118–cysteine 129, cysteine 123–cysteine 138, cysteine 140–cysteine 149, cysteine 156–cysteine 169, cysteine 163–cysteine 178, and cysteine 180–cysteine 189. A glycan (N-linked (GlcNAc...) asparagine) is linked at asparagine 41. One can recognise an EGF-like 3; calcium-binding domain in the interval aspartate 152 to leucine 190. Asparagine 165 carries an N-linked (GlcNAc...) asparagine glycan. N-linked (GlcNAc...) asparagine glycosylation is present at asparagine 194. EGF-like domains follow at residues lysine 201–glutamate 246, lysine 250–glutamine 285, glycine 287–glutamate 323, and glutamate 323–glutamate 363. 30 cysteine pairs are disulfide-bonded: cysteine 205–cysteine 227, cysteine 221–cysteine 234, cysteine 236–cysteine 245, cysteine 254–cysteine 264, cysteine 259–cysteine 273, cysteine 275–cysteine 284, cysteine 291–cysteine 302, cysteine 296–cysteine 311, cysteine 313–cysteine 322, cysteine 327–cysteine 339, cysteine 334–cysteine 351, cysteine 353–cysteine 362, cysteine 369–cysteine 381, cysteine 375–cysteine 390, cysteine 392–cysteine 401, cysteine 408–cysteine 419, cysteine 413–cysteine 429, cysteine 431–cysteine 440, cysteine 462–cysteine 475, cysteine 469–cysteine 480, cysteine 482–cysteine 491, cysteine 507–cysteine 518, cysteine 512–cysteine 529, cysteine 531–cysteine 540, cysteine 547–cysteine 558, cysteine 552–cysteine 567, cysteine 569–cysteine 578, cysteine 586–cysteine 597, cysteine 591–cysteine 607, and cysteine 609–cysteine 618. One can recognise an EGF-like 8; calcium-binding domain in the interval aspartate 365–aspartate 402. N-linked (GlcNAc...) asparagine glycosylation is present at asparagine 378. 5 consecutive EGF-like domains span residues proline 404–glutamate 441, glycine 449–glutamate 492, serine 503–glutamate 541, histidine 543–glutamate 579, and lysine 582–glutamate 619. N-linked (GlcNAc...) asparagine glycosylation is present at asparagine 515. A glycan (N-linked (GlcNAc...) asparagine) is linked at asparagine 623. 9 disulfides stabilise this stretch: cysteine 638–cysteine 661, cysteine 643–cysteine 656, cysteine 652–cysteine 668, cysteine 678–cysteine 702, cysteine 684–cysteine 697, cysteine 693–cysteine 709, cysteine 716–cysteine 742, cysteine 724–cysteine 737, and cysteine 733–cysteine 749. LNR repeat units lie at residues cysteine 638–proline 674, cysteine 678–cysteine 709, and cysteine 716–asparagine 754. N-linked (GlcNAc...) asparagine glycans are attached at residues asparagine 751, asparagine 754, and asparagine 900. Residues alanine 909–glycine 931 form a helical membrane-spanning segment. The Cytoplasmic portion of the chain corresponds to asparagine 932 to phenylalanine 1429. The segment at arginine 933–glutamate 952 is RAM domain. 5 ANK repeats span residues aspartate 1093 to isoleucine 1122, serine 1126 to glutamate 1158, asparagine 1162 to tyrosine 1194, lysine 1206 to lysine 1236, and aspartate 1240 to alanine 1269. The tract at residues isoleucine 1308 to asparagine 1374 is disordered. Over residues lysine 1319–arginine 1330 the composition is skewed to basic residues. The segment covering histidine 1361–asparagine 1374 has biased composition (polar residues).

The protein belongs to the NOTCH family. In terms of assembly, may interact with dsl-1. May interact with lag-2. May interact with osm-11. Interacts with sel-10. When activated, the lin-12/Notch intracellular domain (NICD) can become a component of a complex consisting of at least the NICD, lag-1 and sel-8/lag-3. The NICD probably facilitates ordered assembly of the ternary complex via allosteric interactions of its RBP-j associated molecule (RAM) domain with lag-1. In terms of processing, upon binding its ligands, it is cleaved (S2 cleavage) in its extracellular domain, close to the transmembrane domain. S2 cleavage is probably mediated by the metalloproteases adm-4 and sup-17. It is then cleaved (S3 cleavage) downstream of its transmembrane domain, releasing it from the cell membrane; S3 cleavage requires a multiprotein gamma-secretase complex, which may include presenilin sel-12.

Its subcellular location is the apical cell membrane. The protein localises to the nucleus. Functionally, essential signaling protein which has a major role in many developmental processes; involved in cell fate decisions that require cell-cell interactions. Probable membrane-bound receptor for putative ligands lag-2, apx-1, dsl-1 and osm-11. Upon ligand activation, and releasing from the cell membrane, the lin-12/Notch intracellular domain (NICD) forms a transcriptional activator complex with lag-1 and lag-3 and regulates expression of various genes. Required for ventral cell fates in the postembryonic mesodermal lineage (M lineage) and in uterine precursor cells. Activity in cell fate decisions and tumorigenesis is negatively regulated by sel-10. Best known for involvement in cell-fate decisions during development, but also plays roles in other events. Regulates recovery from the dauer larval state. Modulates chemosensory avoidance of octanol and quiescence during molting. Promotes basement membrane mobility during tissue remodeling. Involved in establishing left-right asymmetry during intestinal organogenesis. This Caenorhabditis elegans protein is Protein lin-12.